The following is a 214-amino-acid chain: Large ribosomal subunit protein uL3 (214 aa).

Positions 129–155 (FGRGPMSHGSKNHRRPGSVGAGTTPGR) are disordered.

Belongs to the universal ribosomal protein uL3 family. As to quaternary structure, part of the 50S ribosomal subunit. Forms a cluster with proteins L14 and L19.

Functionally, one of the primary rRNA binding proteins, it binds directly near the 3'-end of the 23S rRNA, where it nucleates assembly of the 50S subunit. This chain is Large ribosomal subunit protein uL3, found in Synechococcus sp. (strain JA-3-3Ab) (Cyanobacteria bacterium Yellowstone A-Prime).